We begin with the raw amino-acid sequence, 561 residues long: Potassium-transporting ATPase potassium-binding subunit (561 aa).

A run of 12 helical transmembrane segments spans residues Met1–Arg21, Tyr62–Met82, Gly132–Met152, Ile173–Gly193, Phe253–Val273, Leu283–Val303, Phe327–Val347, Ala356–Val376, Gly379–Gly399, Met416–Met436, Met483–Ile503, and Leu526–Ala546.

The protein belongs to the KdpA family. The system is composed of three essential subunits: KdpA, KdpB and KdpC.

It is found in the cell inner membrane. Part of the high-affinity ATP-driven potassium transport (or Kdp) system, which catalyzes the hydrolysis of ATP coupled with the electrogenic transport of potassium into the cytoplasm. This subunit binds the periplasmic potassium ions and delivers the ions to the membrane domain of KdpB through an intramembrane tunnel. In Erwinia tasmaniensis (strain DSM 17950 / CFBP 7177 / CIP 109463 / NCPPB 4357 / Et1/99), this protein is Potassium-transporting ATPase potassium-binding subunit.